A 65-amino-acid chain; its full sequence is MPKMKTKKSAAKRFVVRPGGTVKRGQAFKRHILTKKTTKNKRHLRGSTAVHDSDLNSVRAMLPFA.

This sequence belongs to the bacterial ribosomal protein bL35 family.

This chain is Large ribosomal subunit protein bL35, found in Paraburkholderia xenovorans (strain LB400).